Consider the following 221-residue polypeptide: Large ribosomal subunit protein uL3 (221 aa).

Belongs to the universal ribosomal protein uL3 family. Part of the 50S ribosomal subunit. Forms a cluster with proteins L14 and L19.

Its function is as follows. One of the primary rRNA binding proteins, it binds directly near the 3'-end of the 23S rRNA, where it nucleates assembly of the 50S subunit. The protein is Large ribosomal subunit protein uL3 of Chlamydia trachomatis serovar A (strain ATCC VR-571B / DSM 19440 / HAR-13).